Here is a 290-residue protein sequence, read N- to C-terminus: Protein-glutamine deamidase Cif (290 aa).

The interval Met1 to Arg26 is disordered. Residues Cys117, His173, and Gln193 contribute to the active site.

Belongs to the Cif family.

The protein resides in the secreted. It localises to the host nucleus. It catalyses the reaction L-glutaminyl-[protein] + H2O = L-glutamyl-[protein] + NH4(+). Functionally, protein-glutamine deamidase effector that inhibits the host cell cycle and other key cellular processes such as the actin network and programmed-cell death. Acts by mediating the side chain deamidation of 'Gln-40' of host NEDD8, converting it to glutamate, thereby abolishing the activity of cullin-RING-based E3 ubiquitin-protein ligase complexes (CRL complexes). Inactivation of CRL complexes prevents ubiquitination and subsequent degradation of the cyclin-dependent kinase inhibitors CDKN1A/p21 and CDKN1B/p27, leading to G1 and G2 cell cycle arrests in host cells. Also able to catalyze deamidation of 'Gln-40' of host ubiquitin in vitro; however, NEDD8 constitutes the preferred substrate in vivo. In Yersinia pseudotuberculosis serotype O:3 (strain YPIII), this protein is Protein-glutamine deamidase Cif.